The following is a 356-amino-acid chain: Tyrosine recombinase XerS (356 aa).

In terms of domain architecture, Core-binding (CB) spans Ile16–Thr121. In terms of domain architecture, Tyr recombinase spans Ala169–Asp354. Catalysis depends on residues Arg210, Lys234, His306, Arg309, and His332. The active-site O-(3'-phospho-DNA)-tyrosine intermediate is Tyr341.

This sequence belongs to the 'phage' integrase family. XerS subfamily.

It localises to the cytoplasm. FtsK is required for recombination. In terms of biological role, site-specific tyrosine recombinase, which acts by catalyzing the cutting and rejoining of the recombining DNA molecules. Essential to convert dimers of the bacterial chromosome into monomers to permit their segregation at cell division. The sequence is that of Tyrosine recombinase XerS from Streptococcus pyogenes serotype M5 (strain Manfredo).